The sequence spans 347 residues: Protein-glutamate methylesterase/protein-glutamine glutaminase (347 aa).

One can recognise a Response regulatory domain in the interval 6–123 (RVLVVDDSPT…HRPFGDLAEK (118 aa)). At aspartate 57 the chain carries 4-aspartylphosphate. One can recognise a CheB-type methylesterase domain in the interval 150-342 (FRVGRKIVAI…EEILKLTAAR (193 aa)). Active-site residues include serine 162, histidine 188, and aspartate 284.

Belongs to the CheB family. Phosphorylated by CheA. Phosphorylation of the N-terminal regulatory domain activates the methylesterase activity.

Its subcellular location is the cytoplasm. It carries out the reaction [protein]-L-glutamate 5-O-methyl ester + H2O = L-glutamyl-[protein] + methanol + H(+). It catalyses the reaction L-glutaminyl-[protein] + H2O = L-glutamyl-[protein] + NH4(+). Its function is as follows. Involved in chemotaxis. Part of a chemotaxis signal transduction system that modulates chemotaxis in response to various stimuli. Catalyzes the demethylation of specific methylglutamate residues introduced into the chemoreceptors (methyl-accepting chemotaxis proteins or MCP) by CheR. Also mediates the irreversible deamidation of specific glutamine residues to glutamic acid. The polypeptide is Protein-glutamate methylesterase/protein-glutamine glutaminase (Rhizobium etli (strain ATCC 51251 / DSM 11541 / JCM 21823 / NBRC 15573 / CFN 42)).